The chain runs to 841 residues: Beta-adaptin-like protein A (841 aa).

2 disordered regions span residues 1-25 (MAPP…VSDL) and 650-671 (DENK…LESS). Composition is skewed to polar residues over residues 9–25 (RYPS…VSDL) and 654–671 (GVSN…LESS).

Belongs to the adaptor complexes large subunit family. As to quaternary structure, adaptor protein complexes are heterotetramers composed of two large adaptins (beta-type subunit and alpha-type or delta-type or epsilon-type or gamma-type subunit), a medium adaptin (mu-type subunit) and a small adaptin (sigma-type subunit). Interacts with AHK2.

It localises to the golgi apparatus. It is found in the trans-Golgi network. The protein resides in the cytoplasmic vesicle. The protein localises to the clathrin-coated vesicle membrane. In terms of biological role, subunit of clathrin-associated adaptor protein complex that plays a role in protein sorting in the late-Golgi/trans-Golgi network (TGN) and/or endosomes. The AP complexes mediate both the recruitment of clathrin to membranes and the recognition of sorting signals within the cytosolic tails of transmembrane cargo molecules. This is Beta-adaptin-like protein A (BETAA-AD) from Arabidopsis thaliana (Mouse-ear cress).